A 943-amino-acid polypeptide reads, in one-letter code: Translation initiation factor IF-2 (943 aa).

Residues 29–357 are disordered; that stretch reads LSVKSHSSSV…KPVTERKFHE (329 aa). Basic and acidic residues-rich tracts occupy residues 69 to 82, 112 to 137, 145 to 155, 163 to 196, and 224 to 253; these read PKEE…DKAS, FKAE…DNRN, QGKRHNNDRRN, DHNK…RDNA, and RQSE…EKQQ. Residues 254 to 266 are compositionally biased toward low complexity; the sequence is AEVAVQKAAAETK. The span at 296–309 shows a compositional bias: basic and acidic residues; the sequence is KSRDNRRVNEDGPK. The segment covering 313-332 has biased composition (low complexity); that stretch reads NNKWNNQNQVRNQRNSNWNK. In terms of domain architecture, tr-type G spans 445 to 614; that stretch reads ERAPVVTIMG…LLVAEVEELK (170 aa). The segment at 454–461 is G1; the sequence is GHVDHGKT. 454–461 lines the GTP pocket; it reads GHVDHGKT. A G2 region spans residues 479–483; it reads GITQH. A G3 region spans residues 500–503; that stretch reads DTPG. GTP contacts are provided by residues 500–504 and 554–557; these read DTPGH and NKID. The tract at residues 554 to 557 is G4; that stretch reads NKID. Residues 590 to 592 form a G5 region; that stretch reads SAK.

The protein belongs to the TRAFAC class translation factor GTPase superfamily. Classic translation factor GTPase family. IF-2 subfamily.

The protein localises to the cytoplasm. In terms of biological role, one of the essential components for the initiation of protein synthesis. Protects formylmethionyl-tRNA from spontaneous hydrolysis and promotes its binding to the 30S ribosomal subunits. Also involved in the hydrolysis of GTP during the formation of the 70S ribosomal complex. This is Translation initiation factor IF-2 from Streptococcus thermophilus (strain CNRZ 1066).